A 347-amino-acid chain; its full sequence is UDP-3-O-acylglucosamine N-acyltransferase (347 aa).

Residue His248 is the Proton acceptor of the active site.

This sequence belongs to the transferase hexapeptide repeat family. LpxD subfamily. As to quaternary structure, homotrimer.

It catalyses the reaction a UDP-3-O-[(3R)-3-hydroxyacyl]-alpha-D-glucosamine + a (3R)-hydroxyacyl-[ACP] = a UDP-2-N,3-O-bis[(3R)-3-hydroxyacyl]-alpha-D-glucosamine + holo-[ACP] + H(+). It participates in bacterial outer membrane biogenesis; LPS lipid A biosynthesis. Functionally, catalyzes the N-acylation of UDP-3-O-acylglucosamine using 3-hydroxyacyl-ACP as the acyl donor. Is involved in the biosynthesis of lipid A, a phosphorylated glycolipid that anchors the lipopolysaccharide to the outer membrane of the cell. This chain is UDP-3-O-acylglucosamine N-acyltransferase, found in Synechococcus sp. (strain CC9902).